Reading from the N-terminus, the 84-residue chain is UPF0386 protein NGR_c10980 (84 aa).

The protein belongs to the UPF0386 family.

The sequence is that of UPF0386 protein NGR_c10980 from Sinorhizobium fredii (strain NBRC 101917 / NGR234).